The sequence spans 261 residues: uncharacterized protein (261 aa).

A signal peptide spans 1–22 (MRYLKKVTIYISLLILTIFIGG). Residue Cys-23 is the site of N-palmitoyl cysteine attachment. Residue Cys-23 is the site of S-diacylglycerol cysteine attachment.

The protein belongs to the staphylococcal tandem lipoprotein family.

The protein localises to the cell membrane. This is an uncharacterized protein from Staphylococcus epidermidis (strain ATCC 35984 / DSM 28319 / BCRC 17069 / CCUG 31568 / BM 3577 / RP62A).